Reading from the N-terminus, the 486-residue chain is MIQTVPDPAAHIKEALSVVSEDQSLFECAYGTPHLAKTEMTASSSSDYGQTSKMSPRVPQQDWLSQAPARVTIKMECNPSQVNGSRNSPDECSVNKGGKMVGSPDTVGMSYGSYMEEKHVPPPNMTTNERRVIVPADPTLWSTDHVRQWLEWAVKEYGLLDVDVLLFQNIDGKELCKMTKDDFQRLTPSYNADILLSHLHYLRETPLPHLTSDDVDKALQNSPRLMHARNTGGAAFIFPNTSVYPEATQRITTRPDLPYEPPRRSAWTGHSHLTPQSKAAQPSPSAVPKTEDQRPQLDPYQILGPTSSRLANPGSGQIQLWQFLLELLSDSSNSNCITWEGTNGEFKMTDPDEVARRWGERKSKPNMNYDKLSRALRYYYDKNIMTKVHGKRYAYKFDFHGIAQALQPHPPESSLYKYPSDLPYMGSYHAHPQKMNFVSPHPPALPVTSSSFFASPNPYWNSPTGGIYPNTRLPASHMPSHLGTYY.

Over residues 41–54 the composition is skewed to polar residues; sequence TASSSSDYGQTSKM. Disordered regions lie at residues 41-62 and 79-99; these read TASS…PQQD and PSQV…KGGK. A phosphoserine mark is found at S55, S88, and S103. The PNT domain occupies 120 to 206; that stretch reads VPPPNMTTNE…SHLHYLRETP (87 aa). Residues 249 to 311 are disordered; sequence QRITTRPDLP…ILGPTSSRLA (63 aa). Residues 271–284 are compositionally biased toward polar residues; that stretch reads SHLTPQSKAAQPSP. K289 is covalently cross-linked (Glycyl lysine isopeptide (Lys-Gly) (interchain with G-Cter in SUMO2)). Residues 318-398 constitute a DNA-binding region (ETS); sequence IQLWQFLLEL…HGKRYAYKFD (81 aa).

Belongs to the ETS family. In terms of assembly, identified in a IGF2BP1-dependent mRNP granule complex containing untranslated mRNAs. Interacts with SETDB1.

The protein localises to the nucleus. The protein resides in the cytoplasm. Functionally, transcriptional regulator. May participate in transcriptional regulation through the recruitment of SETDB1 histone methyltransferase and subsequent modification of local chromatin structure. The sequence is that of Transcriptional regulator ERG (Erg) from Mus musculus (Mouse).